The chain runs to 383 residues: Succinyl-diaminopimelate desuccinylase (383 aa).

A Zn(2+)-binding site is contributed by histidine 79. Residue aspartate 81 is part of the active site. Aspartate 110 is a Zn(2+) binding site. Catalysis depends on glutamate 141, which acts as the Proton acceptor. Zn(2+)-binding residues include glutamate 142, glutamate 170, and histidine 355.

This sequence belongs to the peptidase M20A family. DapE subfamily. In terms of assembly, homodimer. It depends on Zn(2+) as a cofactor. Co(2+) is required as a cofactor.

It carries out the reaction N-succinyl-(2S,6S)-2,6-diaminopimelate + H2O = (2S,6S)-2,6-diaminopimelate + succinate. Its pathway is amino-acid biosynthesis; L-lysine biosynthesis via DAP pathway; LL-2,6-diaminopimelate from (S)-tetrahydrodipicolinate (succinylase route): step 3/3. Catalyzes the hydrolysis of N-succinyl-L,L-diaminopimelic acid (SDAP), forming succinate and LL-2,6-diaminopimelate (DAP), an intermediate involved in the bacterial biosynthesis of lysine and meso-diaminopimelic acid, an essential component of bacterial cell walls. This Helicobacter pylori (strain Shi470) protein is Succinyl-diaminopimelate desuccinylase.